The chain runs to 575 residues: Delta-selinene-like synthase, chloroplastic (575 aa).

(2E,6E)-farnesyl diphosphate-binding residues include arginine 288, aspartate 325, aspartate 329, arginine 466, and aspartate 469. Residues aspartate 325 and aspartate 329 each contribute to the Mg(2+) site. The DDXXD motif signature appears at 325–329 (DDLYD). The Mg(2+) site is built by aspartate 469 and glutamate 477.

This sequence belongs to the terpene synthase family. Tpsb subfamily. In terms of assembly, monomer. Mg(2+) is required as a cofactor. Requires Mn(2+) as cofactor.

Its subcellular location is the plastid. It is found in the chloroplast. The catalysed reaction is (2E,6E)-farnesyl diphosphate = (+)-delta-selinene + diphosphate. It functions in the pathway secondary metabolite biosynthesis; terpenoid biosynthesis. Its pathway is terpene metabolism; oleoresin biosynthesis. In terms of biological role, sesquiterpene synthase (sesqui-TPS) involved in the biosynthesis of sesquiterpene natural products. Catalyzes the conversion of (2E)-geranyl diphosphate (GPP) into delta-selinene. The protein is Delta-selinene-like synthase, chloroplastic of Picea sitchensis (Sitka spruce).